Here is a 412-residue protein sequence, read N- to C-terminus: 1-deoxy-D-xylulose 5-phosphate reductoisomerase (412 aa).

NADPH-binding residues include threonine 10, glycine 11, serine 12, isoleucine 13, glycine 36, lysine 37, asparagine 38, and asparagine 130. Lysine 131 is a 1-deoxy-D-xylulose 5-phosphate binding site. Glutamate 132 serves as a coordination point for NADPH. Position 156 (aspartate 156) interacts with Mn(2+). 4 residues coordinate 1-deoxy-D-xylulose 5-phosphate: serine 157, glutamate 158, serine 194, and histidine 217. Residue glutamate 158 coordinates Mn(2+). Glycine 223 contributes to the NADPH binding site. Residues serine 230, asparagine 235, lysine 236, and glutamate 239 each coordinate 1-deoxy-D-xylulose 5-phosphate. Glutamate 239 contributes to the Mn(2+) binding site.

Belongs to the DXR family. Requires Mg(2+) as cofactor. Mn(2+) is required as a cofactor.

The enzyme catalyses 2-C-methyl-D-erythritol 4-phosphate + NADP(+) = 1-deoxy-D-xylulose 5-phosphate + NADPH + H(+). The protein operates within isoprenoid biosynthesis; isopentenyl diphosphate biosynthesis via DXP pathway; isopentenyl diphosphate from 1-deoxy-D-xylulose 5-phosphate: step 1/6. Its function is as follows. Catalyzes the NADPH-dependent rearrangement and reduction of 1-deoxy-D-xylulose-5-phosphate (DXP) to 2-C-methyl-D-erythritol 4-phosphate (MEP). The polypeptide is 1-deoxy-D-xylulose 5-phosphate reductoisomerase (Prochlorococcus marinus (strain NATL1A)).